Consider the following 466-residue polypeptide: UDP-glycosyltransferase 79 (466 aa).

Histidine 27 serves as the catalytic Proton acceptor. UDP-alpha-D-glucose is bound at residue histidine 27. Aspartate 120 serves as the catalytic Charge relay. 11 residues coordinate UDP-alpha-D-glucose: serine 142, threonine 291, phenylalanine 343, cysteine 344, histidine 361, tryptophan 364, asparagine 365, serine 366, glutamate 369, aspartate 385, and glutamine 386. Residues threonine 291, phenylalanine 343, cysteine 344, and histidine 361 each coordinate UDP. Residues asparagine 365, serine 366, and glutamate 369 each coordinate UDP.

This sequence belongs to the UDP-glycosyltransferase family.

In terms of biological role, involved in the detoxification of the Fusarium mycotoxin deoxynivalenol by the transfer of glucose from UDP-D-glucose to the hydroxyl group at C-3, forming deoxynivalenol-3-O-beta-D-glucoside. This chain is UDP-glycosyltransferase 79, found in Oryza sativa subsp. japonica (Rice).